Reading from the N-terminus, the 254-residue chain is Bax inhibitor 1 homolog (254 aa).

Over 1–43 (MASTSNRNFFSSNMTQIPMDEKIRIALQFNNLSQSTKQTLTKV) the chain is Cytoplasmic. A helical membrane pass occupies residues 44 to 64 (YCALAIGILTATVGVLFSMFI). The Lumenal portion of the chain corresponds to 65 to 66 (YR). The chain crosses the membrane as a helical span at residues 67 to 87 (PGFLMTLLLVIGSAILFATTP). Residues 88–98 (RTQDYKTQVKR) lie on the Cytoplasmic side of the membrane. A helical transmembrane segment spans residues 99-119 (FTLFNLVTFVTGMSSSGLIEL). Residues 120–126 (YMDINSS) lie on the Lumenal side of the membrane. The helical transmembrane segment at 127-147 (IVLNAFMATCGIFISFTLFSL) threads the bilayer. Residues 148-152 (LTNKR) lie on the Cytoplasmic side of the membrane. A helical transmembrane segment spans residues 153–173 (LYIFIGSSLASLSIGIFVLAL). Topologically, residues 174–187 (TRLFGGYSEPLDQL) are lumenal. A helical membrane pass occupies residues 188 to 208 (FILAILASSVLFIIFDTQIMV). Topologically, residues 209-217 (HRIENLGEK) are cytoplasmic. An intramembrane region (helical) is located at residues 218–238 (DVLFHAFILFYDFVDLFRVIL). Residues 239-254 (KILAKKENKNNNKSRR) lie on the Cytoplasmic side of the membrane.

The protein belongs to the BI1 family.

Its subcellular location is the endoplasmic reticulum membrane. In Dictyostelium discoideum (Social amoeba), this protein is Bax inhibitor 1 homolog.